The primary structure comprises 147 residues: SsrA-binding protein (147 aa).

Belongs to the SmpB family.

It is found in the cytoplasm. Its function is as follows. Required for rescue of stalled ribosomes mediated by trans-translation. Binds to transfer-messenger RNA (tmRNA), required for stable association of tmRNA with ribosomes. tmRNA and SmpB together mimic tRNA shape, replacing the anticodon stem-loop with SmpB. tmRNA is encoded by the ssrA gene; the 2 termini fold to resemble tRNA(Ala) and it encodes a 'tag peptide', a short internal open reading frame. During trans-translation Ala-aminoacylated tmRNA acts like a tRNA, entering the A-site of stalled ribosomes, displacing the stalled mRNA. The ribosome then switches to translate the ORF on the tmRNA; the nascent peptide is terminated with the 'tag peptide' encoded by the tmRNA and targeted for degradation. The ribosome is freed to recommence translation, which seems to be the essential function of trans-translation. In Thermosipho melanesiensis (strain DSM 12029 / CIP 104789 / BI429), this protein is SsrA-binding protein.